A 126-amino-acid polypeptide reads, in one-letter code: MSFTPRTARHTPFERRTTLMANTVIGSSIVIDGEISGDEDLVIQGTVKGKISLKESLYVEGSGVVEADIETQNVEIAGRVTGNIVASDKVELKTDCRVVGDIKAPRILIADGASFKGNVDMDMKER.

This sequence belongs to the bactofilin family. In terms of assembly, interacts with BacN and probably also BacP, the 3 proteins colocalize as an extended structure. Interacts with PadC.

The protein resides in the cytoplasm. It is found in the cytoskeleton. Its function is as follows. A non-essential component of the chromosome segregation machinery. Positions the ParA-ParB-parS chromosome segregation machinery within the cell; BacP seems to be the most important bactofilin in this process. Forms a heteropolymeric, subpolar scaffold in the cell; BacP probably forms the core, BacO contributes to position and integrity while BacN does not seem to contribute to assembly. The sequence is that of Bactofilin BacO from Myxococcus xanthus (strain DK1622).